The following is a 214-amino-acid chain: Pyridoxine/pyridoxamine 5'-phosphate oxidase (214 aa).

Residues 8–11 and lysine 66 each bind substrate; that span reads RINY. Residues 61–66, 76–77, arginine 82, lysine 83, and glutamine 105 each bind FMN; these read RIVLIK and FT. Residues tyrosine 123, arginine 127, and serine 131 each coordinate substrate. FMN-binding positions include 140–141 and tryptophan 184; that span reads QS. Residue 190–192 participates in substrate binding; sequence RLH. Arginine 194 contacts FMN.

This sequence belongs to the pyridoxamine 5'-phosphate oxidase family. Homodimer. It depends on FMN as a cofactor.

The catalysed reaction is pyridoxamine 5'-phosphate + O2 + H2O = pyridoxal 5'-phosphate + H2O2 + NH4(+). It carries out the reaction pyridoxine 5'-phosphate + O2 = pyridoxal 5'-phosphate + H2O2. It functions in the pathway cofactor metabolism; pyridoxal 5'-phosphate salvage; pyridoxal 5'-phosphate from pyridoxamine 5'-phosphate: step 1/1. The protein operates within cofactor metabolism; pyridoxal 5'-phosphate salvage; pyridoxal 5'-phosphate from pyridoxine 5'-phosphate: step 1/1. In terms of biological role, catalyzes the oxidation of either pyridoxine 5'-phosphate (PNP) or pyridoxamine 5'-phosphate (PMP) into pyridoxal 5'-phosphate (PLP). The protein is Pyridoxine/pyridoxamine 5'-phosphate oxidase of Burkholderia cenocepacia (strain HI2424).